The primary structure comprises 377 residues: Probable aspartic-type endopeptidase CTSD (377 aa).

The Peptidase A1 domain occupies 1 to 292 (SLIDTGASRT…DFDKNRVGLA (292 aa)). Residue D4 is part of the active site. N58 carries an N-linked (GlcNAc...) asparagine glycan. Residue D186 is part of the active site. The disordered stretch occupies residues 296-351 (YGETKDPPSSSHPPPAPTSNKASGGSPGLPEQSGTSSATTSTTGEPSSGSTASPSA). Residues 328–351 (SGTSSATTSTTGEPSSGSTASPSA) are compositionally biased toward low complexity. S350 carries the GPI-anchor amidated serine lipid modification. Positions 351–377 (AASSVSMSAWLSLAVFLSTASSLILWD) are cleaved as a propeptide — removed in mature form.

It belongs to the peptidase A1 family.

It localises to the cell membrane. Secreted aspartic-type endopeptidase which is secreted and contributes to virulence. The chain is Probable aspartic-type endopeptidase CTSD (CTSD) from Arthroderma otae (strain ATCC MYA-4605 / CBS 113480) (Microsporum canis).